Consider the following 78-residue polypeptide: Conotoxin ArMKLT2-0312 (78 aa).

An N-terminal signal peptide occupies residues 1–22 (MKLTCVLIIAVLFLTACQLITA). The propeptide occupies 23–45 (DYSRDKQEYRAVRLRDAMRYSRV). The residue at position 48 (glutamine 48) is a Pyrrolidone carboxylic acid. 3 cysteine pairs are disulfide-bonded: cysteine 49–cysteine 62, cysteine 56–cysteine 67, and cysteine 61–cysteine 75.

This sequence belongs to the conotoxin O1 superfamily. In terms of tissue distribution, expressed by the venom duct.

It is found in the secreted. This Conus arenatus (Sand-dusted cone) protein is Conotoxin ArMKLT2-0312.